A 543-amino-acid polypeptide reads, in one-letter code: DM7 family protein GG19680 (543 aa).

Residues 415 to 430 (GETQEMDEAHPTKEES) are compositionally biased toward basic and acidic residues. The disordered stretch occupies residues 415–443 (GETQEMDEAHPTKEESKSEEEGEVQSGSQ).

The protein belongs to the DM7 family.

The sequence is that of DM7 family protein GG19680 from Drosophila erecta (Fruit fly).